The primary structure comprises 113 residues: U11-theraphotoxin-Hhn1o (113 aa).

An N-terminal signal peptide occupies residues Met-1–Ala-21. Positions Asp-22 to Arg-74 are excised as a propeptide. A disordered region spans residues Glu-61–Asp-83. Disulfide bonds link Cys-75–Cys-90 and Cys-82–Cys-95.

Belongs to the neurotoxin 14 (magi-1) family. 01 (HNTX-16) subfamily. Expressed by the venom gland.

The protein localises to the secreted. Its function is as follows. Probable ion channel inhibitor. The sequence is that of U11-theraphotoxin-Hhn1o from Cyriopagopus hainanus (Chinese bird spider).